The chain runs to 355 residues: Plasmodial-specific protein LAV1-2 (355 aa).

EF-hand domains are found at residues 151–186 (EDTN…YADT) and 217–252 (NDLA…LGFD). Asp-230, Asn-232, Asn-234, Thr-236, Glu-241, Asp-265, Asp-267, Ser-269, Asp-271, Glu-276, Asp-295, Asp-297, Ser-299, Gln-301, Glu-306, Asp-332, Asp-334, Ser-336, Ser-338, and Glu-343 together coordinate Ca(2+). 2 consecutive EF-hand domains span residues 282 to 317 (LCLL…AHIP) and 319 to 354 (SARK…MFHD).

In Physarum polycephalum (Slime mold), this protein is Plasmodial-specific protein LAV1-2.